A 696-amino-acid polypeptide reads, in one-letter code: Elongation factor G (696 aa).

The tr-type G domain occupies 8–288 (EDYRNFGIMA…AVVDFLPSPI (281 aa)). GTP contacts are provided by residues 17–24 (AHIDAGKT), 86–90 (DTPGH), and 140–143 (NKMD).

The protein belongs to the TRAFAC class translation factor GTPase superfamily. Classic translation factor GTPase family. EF-G/EF-2 subfamily.

Its subcellular location is the cytoplasm. Functionally, catalyzes the GTP-dependent ribosomal translocation step during translation elongation. During this step, the ribosome changes from the pre-translocational (PRE) to the post-translocational (POST) state as the newly formed A-site-bound peptidyl-tRNA and P-site-bound deacylated tRNA move to the P and E sites, respectively. Catalyzes the coordinated movement of the two tRNA molecules, the mRNA and conformational changes in the ribosome. In Chelativorans sp. (strain BNC1), this protein is Elongation factor G.